A 107-amino-acid polypeptide reads, in one-letter code: Anti-adapter protein IraM (107 aa).

It belongs to the IraM/RssC family.

It localises to the cytoplasm. Its function is as follows. Inhibits RpoS proteolysis by regulating RssB activity, thereby increasing the stability of the sigma stress factor RpoS during magnesium starvation. This chain is Anti-adapter protein IraM, found in Escherichia coli (strain K12 / MC4100 / BW2952).